Here is a 373-residue protein sequence, read N- to C-terminus: Integrator complex subunit 15 (373 aa).

This sequence belongs to the Integrator subunit 15 family. Belongs to the multiprotein complex Integrator, at least composed of IntS1, IntS2, IntS3, IntS4, omd/IntS5, IntS6, defl/IntS7, IntS8, IntS9, IntS10, IntS11, IntS12, asun/IntS13, IntS14 and IntS15. The core complex associates with protein phosphatase 2A subunits mts/PP2A and Pp2A-29B, to form the Integrator-PP2A (INTAC) complex.

The protein localises to the nucleus. In terms of biological role, component of the integrator complex, a multiprotein complex that terminates RNA polymerase II (Pol II) transcription in the promoter-proximal region of genes. The integrator complex provides a quality checkpoint during transcription elongation by driving premature transcription termination of transcripts that are unfavorably configured for transcriptional elongation: the complex terminates transcription by (1) catalyzing dephosphorylation of the C-terminal domain (CTD) of Pol II subunit Rbp1 and Spt5, and (2) degrading the exiting nascent RNA transcript via endonuclease activity. The integrator complex is also involved in the 3'-end processing of the U7 snRNA, and also the spliceosomal snRNAs U1, U2, U4 and U5. This chain is Integrator complex subunit 15, found in Drosophila melanogaster (Fruit fly).